The chain runs to 255 residues: Diphthine--ammonia ligase (255 aa).

Belongs to the Diphthine--ammonia ligase family.

It catalyses the reaction diphthine-[translation elongation factor 2] + NH4(+) + ATP = diphthamide-[translation elongation factor 2] + AMP + diphosphate + H(+). Its pathway is protein modification; peptidyl-diphthamide biosynthesis. Its function is as follows. Amidase that catalyzes the last step of diphthamide biosynthesis using ammonium and ATP. Diphthamide biosynthesis consists in the conversion of an L-histidine residue in the translation elongation factor eEF-2 (EEF2) to diphthamide. The chain is Diphthine--ammonia ligase (dph6) from Danio rerio (Zebrafish).